Here is a 107-residue protein sequence, read N- to C-terminus: Endonuclease ALBA3 (107 aa).

2 positions are modified to N6-acetyllysine: Lys23 and Lys32.

Belongs to the histone-like Alba family. In terms of assembly, homodimer. Interacts (acetylated and unacetylated) with Sir2A. It depends on a divalent metal cation as a cofactor. In terms of processing, acetylated. Exists in both acetylated and unacetylated forms but predominantly in an acetylated form. Deacetylated by Sir2A.

The protein resides in the nucleus. The protein localises to the chromosome. It is found in the telomere. It localises to the cytoplasm. Its activity is regulated as follows. Mild acetylation lowers protein interaction with DNA and high acetylation abolishes DNA-binding activity. DNA binding and endonuclease activity is modulated via deacetylation of Lys-23 by Sir2A. Inhibited in the presence of EDTA and EGTA. Functionally, possesses DNA-binding and endonuclease activities. Binds DNA cooperatively in sequence-independent manner at the DNA minor groove. Exhibits apurinic/apyrimidinic site-driven endonuclease activity. Binds RNA; shows high affinity for poly(A) and a lower affinity for poly(U) templates. In vitro, prevents transcription after DNA binding. Associates with the telomeric region, the subtelomeric TARE6 repeat sequence and the var gene promoters. This chain is Endonuclease ALBA3, found in Plasmodium falciparum (isolate 3D7).